We begin with the raw amino-acid sequence, 384 residues long: Dual-specificity RNA methyltransferase RlmN (384 aa).

The Proton acceptor role is filled by E105. The Radical SAM core domain occupies 111–350 (EVDRATLCVS…TIVRKTRGDD (240 aa)). A disulfide bridge links C118 with C355. C125, C129, and C132 together coordinate [4Fe-4S] cluster. S-adenosyl-L-methionine contacts are provided by residues 179 to 180 (GE), S211, 233 to 235 (SLH), and N312. The active-site S-methylcysteine intermediate is the C355.

The protein belongs to the radical SAM superfamily. RlmN family. Requires [4Fe-4S] cluster as cofactor.

It localises to the cytoplasm. The enzyme catalyses adenosine(2503) in 23S rRNA + 2 reduced [2Fe-2S]-[ferredoxin] + 2 S-adenosyl-L-methionine = 2-methyladenosine(2503) in 23S rRNA + 5'-deoxyadenosine + L-methionine + 2 oxidized [2Fe-2S]-[ferredoxin] + S-adenosyl-L-homocysteine. It carries out the reaction adenosine(37) in tRNA + 2 reduced [2Fe-2S]-[ferredoxin] + 2 S-adenosyl-L-methionine = 2-methyladenosine(37) in tRNA + 5'-deoxyadenosine + L-methionine + 2 oxidized [2Fe-2S]-[ferredoxin] + S-adenosyl-L-homocysteine. Its function is as follows. Specifically methylates position 2 of adenine 2503 in 23S rRNA and position 2 of adenine 37 in tRNAs. m2A2503 modification seems to play a crucial role in the proofreading step occurring at the peptidyl transferase center and thus would serve to optimize ribosomal fidelity. This is Dual-specificity RNA methyltransferase RlmN from Escherichia coli O9:H4 (strain HS).